A 348-amino-acid chain; its full sequence is Protein pelota homolog (348 aa).

This sequence belongs to the eukaryotic release factor 1 family. Pelota subfamily. Monomer. It depends on a divalent metal cation as a cofactor.

Its subcellular location is the cytoplasm. Functionally, may function in recognizing stalled ribosomes, interact with stem-loop structures in stalled mRNA molecules, and effect endonucleolytic cleavage of the mRNA. May play a role in the release non-functional ribosomes and degradation of damaged mRNAs. Has endoribonuclease activity. The sequence is that of Protein pelota homolog from Methanococcus vannielii (strain ATCC 35089 / DSM 1224 / JCM 13029 / OCM 148 / SB).